The chain runs to 427 residues: Serine--tRNA ligase (427 aa).

229–231 contacts L-serine; the sequence is TAE. An ATP-binding site is contributed by 260-262; the sequence is RSE. E283 contacts L-serine. 347–350 is a binding site for ATP; sequence EISS. Position 383 (S383) interacts with L-serine.

The protein belongs to the class-II aminoacyl-tRNA synthetase family. Type-1 seryl-tRNA synthetase subfamily. Homodimer. The tRNA molecule binds across the dimer.

The protein localises to the cytoplasm. The catalysed reaction is tRNA(Ser) + L-serine + ATP = L-seryl-tRNA(Ser) + AMP + diphosphate + H(+). It carries out the reaction tRNA(Sec) + L-serine + ATP = L-seryl-tRNA(Sec) + AMP + diphosphate + H(+). It participates in aminoacyl-tRNA biosynthesis; selenocysteinyl-tRNA(Sec) biosynthesis; L-seryl-tRNA(Sec) from L-serine and tRNA(Sec): step 1/1. Its function is as follows. Catalyzes the attachment of serine to tRNA(Ser). Is also able to aminoacylate tRNA(Sec) with serine, to form the misacylated tRNA L-seryl-tRNA(Sec), which will be further converted into selenocysteinyl-tRNA(Sec). The chain is Serine--tRNA ligase from Nitrosococcus oceani (strain ATCC 19707 / BCRC 17464 / JCM 30415 / NCIMB 11848 / C-107).